Reading from the N-terminus, the 202-residue chain is Imidazoleglycerol-phosphate dehydratase (202 aa).

Belongs to the imidazoleglycerol-phosphate dehydratase family.

Its subcellular location is the cytoplasm. The enzyme catalyses D-erythro-1-(imidazol-4-yl)glycerol 3-phosphate = 3-(imidazol-4-yl)-2-oxopropyl phosphate + H2O. It functions in the pathway amino-acid biosynthesis; L-histidine biosynthesis; L-histidine from 5-phospho-alpha-D-ribose 1-diphosphate: step 6/9. The chain is Imidazoleglycerol-phosphate dehydratase from Rhizobium johnstonii (strain DSM 114642 / LMG 32736 / 3841) (Rhizobium leguminosarum bv. viciae).